The primary structure comprises 241 residues: 1-(5-phosphoribosyl)-5-[(5-phosphoribosylamino)methylideneamino] imidazole-4-carboxamide isomerase (241 aa).

D8 acts as the Proton acceptor in catalysis. Residue D130 is the Proton donor of the active site.

The protein belongs to the HisA/HisF family.

It is found in the cytoplasm. It carries out the reaction 1-(5-phospho-beta-D-ribosyl)-5-[(5-phospho-beta-D-ribosylamino)methylideneamino]imidazole-4-carboxamide = 5-[(5-phospho-1-deoxy-D-ribulos-1-ylimino)methylamino]-1-(5-phospho-beta-D-ribosyl)imidazole-4-carboxamide. It functions in the pathway amino-acid biosynthesis; L-histidine biosynthesis; L-histidine from 5-phospho-alpha-D-ribose 1-diphosphate: step 4/9. The chain is 1-(5-phosphoribosyl)-5-[(5-phosphoribosylamino)methylideneamino] imidazole-4-carboxamide isomerase from Leptospira borgpetersenii serovar Hardjo-bovis (strain JB197).